A 362-amino-acid polypeptide reads, in one-letter code: UDP-N-acetylglucosamine--N-acetylmuramyl-(pentapeptide) pyrophosphoryl-undecaprenol N-acetylglucosamine transferase (362 aa).

UDP-N-acetyl-alpha-D-glucosamine-binding positions include 14 to 16, Asn-122, Arg-163, Ser-190, and Gln-285; that span reads TGG.

It belongs to the glycosyltransferase 28 family. MurG subfamily.

It localises to the cell inner membrane. The enzyme catalyses di-trans,octa-cis-undecaprenyl diphospho-N-acetyl-alpha-D-muramoyl-L-alanyl-D-glutamyl-meso-2,6-diaminopimeloyl-D-alanyl-D-alanine + UDP-N-acetyl-alpha-D-glucosamine = di-trans,octa-cis-undecaprenyl diphospho-[N-acetyl-alpha-D-glucosaminyl-(1-&gt;4)]-N-acetyl-alpha-D-muramoyl-L-alanyl-D-glutamyl-meso-2,6-diaminopimeloyl-D-alanyl-D-alanine + UDP + H(+). The protein operates within cell wall biogenesis; peptidoglycan biosynthesis. Cell wall formation. Catalyzes the transfer of a GlcNAc subunit on undecaprenyl-pyrophosphoryl-MurNAc-pentapeptide (lipid intermediate I) to form undecaprenyl-pyrophosphoryl-MurNAc-(pentapeptide)GlcNAc (lipid intermediate II). The protein is UDP-N-acetylglucosamine--N-acetylmuramyl-(pentapeptide) pyrophosphoryl-undecaprenol N-acetylglucosamine transferase of Prochlorococcus marinus (strain MIT 9215).